A 294-amino-acid polypeptide reads, in one-letter code: Cell division protein ZipA (294 aa).

Residue methionine 1 is a topological domain, periplasmic. A helical transmembrane segment spans residues 2–22 (EIGLREWLILIGIIVIAGILF). Residues 23–294 (DGWRRMRGGK…FERRALTQKR (272 aa)) are Cytoplasmic-facing. Disordered stretches follow at residues 64-111 (THKE…GDLN) and 126-146 (KDDF…STPV). The segment covering 82 to 91 (ARERERDPKP) has biased composition (basic and acidic residues).

Belongs to the ZipA family. As to quaternary structure, interacts with FtsZ via their C-terminal domains.

The protein resides in the cell inner membrane. Functionally, essential cell division protein that stabilizes the FtsZ protofilaments by cross-linking them and that serves as a cytoplasmic membrane anchor for the Z ring. Also required for the recruitment to the septal ring of downstream cell division proteins. The protein is Cell division protein ZipA of Pseudomonas entomophila (strain L48).